Here is a 148-residue protein sequence, read N- to C-terminus: Histone H2A-like 3 (148 aa).

The disordered stretch occupies residues Asp-101–Val-128. A compositionally biased stretch (acidic residues) spans Pro-111–Met-127.

It belongs to the histone H2A family. As to quaternary structure, the nucleosome is a histone octamer containing two molecules each of H2A, H2B, H3 and H4 assembled in one H3-H4 heterotetramer and two H2A-H2B heterodimers. The octamer wraps approximately 147 bp of DNA.

The protein localises to the nucleus. Its subcellular location is the chromosome. In terms of biological role, core component of nucleosome. Nucleosomes wrap and compact DNA into chromatin, limiting DNA accessibility to the cellular machineries which require DNA as a template. Histones thereby play a central role in transcription regulation, DNA repair, DNA replication and chromosomal stability. DNA accessibility is regulated via a complex set of post-translational modifications of histones, also called histone code, and nucleosome remodeling. This chain is Histone H2A-like 3, found in Homo sapiens (Human).